The primary structure comprises 494 residues: Transcriptional regulator of yeast form adherence 3 (494 aa).

The SPX domain maps to 1–360; it reads MKFAKTLERT…SLGIQKTFPK (360 aa). The segment at 398–437 adopts an RING-type zinc-finger fold; sequence CPICMNIAYKPIRLSCGHLFCVRCLVKMKQDDKTSCPLCR.

The protein localises to the nucleus. Functionally, transcription factor required for yeast cell adherence to silicone substrate. This chain is Transcriptional regulator of yeast form adherence 3 (TRY3), found in Candida albicans (strain SC5314 / ATCC MYA-2876) (Yeast).